The following is a 699-amino-acid chain: Polyribonucleotide nucleotidyltransferase (699 aa).

Mg(2+)-binding residues include Asp-485 and Asp-491. The 60-residue stretch at Pro-552–Ile-611 folds into the KH domain. One can recognise an S1 motif domain in the interval Gly-621–Lys-689.

The protein belongs to the polyribonucleotide nucleotidyltransferase family. As to quaternary structure, component of the RNA degradosome, which is a multiprotein complex involved in RNA processing and mRNA degradation. Mg(2+) is required as a cofactor.

It is found in the cytoplasm. It catalyses the reaction RNA(n+1) + phosphate = RNA(n) + a ribonucleoside 5'-diphosphate. In terms of biological role, involved in mRNA degradation. Catalyzes the phosphorolysis of single-stranded polyribonucleotides processively in the 3'- to 5'-direction. This is Polyribonucleotide nucleotidyltransferase from Shewanella oneidensis (strain ATCC 700550 / JCM 31522 / CIP 106686 / LMG 19005 / NCIMB 14063 / MR-1).